A 1261-amino-acid chain; its full sequence is Apoptotic protease-activating factor 1 (1261 aa).

One can recognise a CARD domain in the interval 1-90 (MEERARSRLL…GDLASLLHSD (90 aa)). The region spanning 106–417 (VSPSVQAILS…LELEEVEDVL (312 aa)) is the NB-ARC domain. Residue 154–161 (GMAGSGKS) coordinates ATP. WD repeat units follow at residues 615–654 (PHQGAVYYACFSKDGSKIASCGASKALRVFKSTSGEKLLE), 657–696 (AHEEDVLCCAFSPDDRHIATCASDRKVKLWNVERGVLIRE), 700–743 (EHEE…SQNT), 746–785 (GHMEPVNHCCFSPNDLYLATSSSDGSLKLFEVSSANEWKS), 798–836 (EIKAMVKCSTWSADGSQIICAARNTVFVFDVETSDLLLK), 840–879 (SRLSTIQFCHACPNSSLLAVALSHYTVELWNFESSKKKAE), 882–921 (GHLSWVHCVQFSPDGSLLLSSSDDQTIRLWETDRVHTSSA), 964–1003 (ELSSRIRCSCISRNAAFVALGSEDGTVQVIEVPSSKASVK), 1006–1045 (GHTKTVHHCQFTDDCEILITSSEDSTIRVWKWRTGECMVL), 1047–1088 (GHME…MLQD), 1091–1130 (CHEGAVLSCDVSSDGRLFATTSANRTAKVWSSASWKMLFL), 1133–1172 (GHKDCVRSCRFSWDNKRLATGDDNGEIRLWSMLDGALLKI), and 1184–1223 (YHAGWVTDLHFSPDNRVLVSTAGYIKWWSVESGEALQTFY).

As to quaternary structure, monomer. Oligomerizes upon binding of cytochrome c and dATP.

It is found in the cytoplasm. In terms of biological role, oligomeric Apaf-1 mediates the cytochrome c-dependent autocatalytic activation of pro-caspase-9 (Apaf-3), leading to the activation of caspase-3 and apoptosis. This activation requires ATP. The sequence is that of Apoptotic protease-activating factor 1 (apaf1) from Danio rerio (Zebrafish).